A 504-amino-acid chain; its full sequence is Anaerobic nitric oxide reductase transcription regulator NorR (504 aa).

Aspartate 57 carries the 4-aspartylphosphate modification. Residues 187–416 (MIGLSPGMTQ…LEHAIHRAVV (230 aa)) enclose the Sigma-54 factor interaction domain. Residues 215 to 222 (GETGTGKE) and 278 to 287 (ADNGTLFLDE) each bind ATP. The segment at residues 479 to 498 (WAACARMLETDVANLHRLAK) is a DNA-binding region (H-T-H motif).

It participates in nitrogen metabolism; nitric oxide reduction. Functionally, required for the expression of anaerobic nitric oxide (NO) reductase, acts as a transcriptional activator for at least the norVW operon. Activation also requires sigma-54. The chain is Anaerobic nitric oxide reductase transcription regulator NorR from Escherichia coli O81 (strain ED1a).